A 693-amino-acid polypeptide reads, in one-letter code: Elongation factor G (693 aa).

In terms of domain architecture, tr-type G spans 8–283; sequence PQQRNIGIMA…AVVEYLPSPV (276 aa). GTP is bound by residues 17–24, 81–85, and 135–138; these read AHIDAGKT, DTPGH, and NKMD.

The protein belongs to the TRAFAC class translation factor GTPase superfamily. Classic translation factor GTPase family. EF-G/EF-2 subfamily.

It is found in the cytoplasm. In terms of biological role, catalyzes the GTP-dependent ribosomal translocation step during translation elongation. During this step, the ribosome changes from the pre-translocational (PRE) to the post-translocational (POST) state as the newly formed A-site-bound peptidyl-tRNA and P-site-bound deacylated tRNA move to the P and E sites, respectively. Catalyzes the coordinated movement of the two tRNA molecules, the mRNA and conformational changes in the ribosome. This is Elongation factor G from Oleidesulfovibrio alaskensis (strain ATCC BAA-1058 / DSM 17464 / G20) (Desulfovibrio alaskensis).